The sequence spans 412 residues: cAMP-dependent protein kinase regulatory subunit (412 aa).

The segment at 1–142 (MSFEEVYEEL…RLKRSVAGNF (142 aa)) is dimerization and phosphorylation. Positions 101 to 105 (RRQSV) match the Pseudophosphorylation motif motif. The residue at position 104 (Ser-104) is a Phosphoserine. Residues 143–277 (LFKN…EEVP), Glu-224, Arg-233, 278–412 (ILSS…STKA), Glu-344, and Arg-353 each bind 3',5'-cyclic AMP. A disordered region spans residues 392 to 412 (MGMDNEYGDQSLHRSPPSTKA).

The protein belongs to the cAMP-dependent kinase regulatory chain family. In terms of assembly, tetramer, composed of 2 regulatory (R) and 2 catalytic (C) subunits. In the presence of cAMP it dissociates into 2 active monomeric C subunits and an R dimer.

The polypeptide is cAMP-dependent protein kinase regulatory subunit (cgs1) (Schizosaccharomyces pombe (strain 972 / ATCC 24843) (Fission yeast)).